Here is a 271-residue protein sequence, read N- to C-terminus: Shikimate dehydrogenase (NADP(+)) (271 aa).

Shikimate contacts are provided by residues 14 to 16 and T61; that span reads SKS. The active-site Proton acceptor is K65. The shikimate site is built by N86 and D102. NADP(+) is bound by residues 126 to 130, 149 to 154, and M213; these read GAGGA and NRTFSR. Y215 is a binding site for shikimate. Position 238 (G238) interacts with NADP(+).

The protein belongs to the shikimate dehydrogenase family. Homodimer.

The enzyme catalyses shikimate + NADP(+) = 3-dehydroshikimate + NADPH + H(+). The protein operates within metabolic intermediate biosynthesis; chorismate biosynthesis; chorismate from D-erythrose 4-phosphate and phosphoenolpyruvate: step 4/7. In terms of biological role, involved in the biosynthesis of the chorismate, which leads to the biosynthesis of aromatic amino acids. Catalyzes the reversible NADPH linked reduction of 3-dehydroshikimate (DHSA) to yield shikimate (SA). In Histophilus somni (strain 2336) (Haemophilus somnus), this protein is Shikimate dehydrogenase (NADP(+)).